The sequence spans 278 residues: TIMELESS-interacting protein (278 aa).

The disordered stretch occupies residues 1 to 59 (MLEQEENGLFEIPDYEHVEDETFPPFPPPASPERDPADAEPEEGSGSGVPVPPKRTVKR). An interaction with TIMELESS region spans residues 64-140 (LDATRLTSER…KEVQTCLKRI (77 aa)). Disordered regions lie at residues 155-197 (NDEV…EEQQ) and 216-278 (LSNS…TNLD). Phosphoserine occurs at positions 191 and 219. Over residues 226–239 (VTVEENSTGEDQEE) the composition is skewed to acidic residues. Threonine 233 carries the phosphothreonine modification. Residues 259–278 (THEEEQCKAEETQLDHTNLD) are compositionally biased toward basic and acidic residues.

Belongs to the CSM3 family. In terms of assembly, interacts with MCM6 and MCM7. Interacts with TIMELESS (via N-terminus), which impairs TIMELESS self-association. Interacts with RPA2 and PRDX2. Expressed in brain.

The protein resides in the cytoplasm. The protein localises to the nucleus. In terms of biological role, plays an important role in the control of DNA replication and the maintenance of replication fork stability. Important for cell survival after DNA damage or replication stress. May be specifically required for the ATR-CHEK1 pathway in the replication checkpoint induced by hydroxyurea or ultraviolet light. Forms a complex with TIMELESS and this complex regulates DNA replication processes under both normal and stress conditions, stabilizes replication forks and influences both CHEK1 phosphorylation and the intra-S phase checkpoint in response to genotoxic stress. The sequence is that of TIMELESS-interacting protein (Tipin) from Mus musculus (Mouse).